The chain runs to 360 residues: Protein phosphatase 1 regulatory subunit 7 (360 aa).

The disordered stretch occupies residues 1-64 (MAAERGAGQQ…GEEDPEEEHE (64 aa)). Ala2 is modified (N-acetylalanine). Phosphoserine is present on residues Ser12, Ser24, Ser27, Ser44, and Ser47. Residues 17-34 (EVDRRVESEESGDEEGKK) are compositionally biased toward basic and acidic residues. Positions 53–63 (ERGEEDPEEEH) are enriched in acidic residues. LRR repeat units lie at residues 77 to 98 (DAEDVDLNHYRIGKIEGFEVLK), 99 to 120 (KVKTLCLRQNLIKCIENLEELQ), 121 to 142 (SLRELDLYDNQIKKIENLEALT), 143 to 164 (ELEILDISFNLLRNIEGVDKLT), 165 to 186 (RLKKLFLVNNKISKIENLSNLH), 187 to 208 (QLQMLELGSNRIRAIENIDTLT), 209 to 230 (NLESLFLGKNKITKLQNLDALT), 231 to 252 (NLTVLSMQSNRLTKIEGLQNLV), 253 to 274 (NLRELYLSHNGIEVIEGLENNN), 275 to 296 (KLTMLDIASNRIKKIENISHLT), and 297 to 318 (ELQEFWMNDNLLESWSDLDELK). Ser322 carries the post-translational modification Phosphoserine. Residues 331–360 (NPLQKDPQYRRKVMLALPSVRQIDATFVRF) form the LRRCT domain.

It belongs to the SDS22 family. As to quaternary structure, interacts with PPP1CA, PPP1CB and PPP1CC/PPP1G isoform 1. As to expression, widely expressed.

Its subcellular location is the nucleus. In terms of biological role, regulatory subunit of protein phosphatase 1. The chain is Protein phosphatase 1 regulatory subunit 7 (PPP1R7) from Homo sapiens (Human).